A 327-amino-acid chain; its full sequence is ATP-dependent 6-phosphofructokinase (327 aa).

ATP-binding positions include Gly12, 73–74 (RL), and 103–106 (GDGS). A Mg(2+)-binding site is contributed by Asp104. 126–128 (TID) is a binding site for substrate. Asp128 serves as the catalytic Proton acceptor. Arg155 contacts ADP. Substrate-binding positions include Arg163 and 170-172 (MGH). Residues 186–188 (GAD) and 214–216 (KRS) each bind ADP. Residues Glu223, Arg245, and 251 to 254 (HTQR) each bind substrate.

This sequence belongs to the phosphofructokinase type A (PFKA) family. ATP-dependent PFK group I subfamily. Prokaryotic clade 'B1' sub-subfamily. As to quaternary structure, homotetramer. It depends on Mg(2+) as a cofactor.

The protein resides in the cytoplasm. It carries out the reaction beta-D-fructose 6-phosphate + ATP = beta-D-fructose 1,6-bisphosphate + ADP + H(+). It functions in the pathway carbohydrate degradation; glycolysis; D-glyceraldehyde 3-phosphate and glycerone phosphate from D-glucose: step 3/4. Its activity is regulated as follows. Allosterically activated by ADP and other diphosphonucleosides, and allosterically inhibited by phosphoenolpyruvate. Functionally, catalyzes the phosphorylation of D-fructose 6-phosphate to fructose 1,6-bisphosphate by ATP, the first committing step of glycolysis. The chain is ATP-dependent 6-phosphofructokinase from Spiroplasma citri.